A 919-amino-acid polypeptide reads, in one-letter code: PAX3- and PAX7-binding protein 1 (919 aa).

Basic residues predominate over residues 1 to 11 (MFRKARRVNVR). Disordered stretches follow at residues 1 to 120 (MFRK…ENEE), 151 to 206 (KTEL…GGAF), and 237 to 277 (AREL…RIVF). The residue at position 16 (serine 16) is a Phosphoserine. Over residues 16-28 (SEEEERERDEEQE) the composition is skewed to acidic residues. The segment covering 49–59 (RAPAGESLLGP) has biased composition (low complexity). Residues 75–87 (AEAGGGISGGAEP) are compositionally biased toward gly residues. Residue lysine 151 forms a Glycyl lysine isopeptide (Lys-Gly) (interchain with G-Cter in SUMO1); alternate linkage. Lysine 151 is covalently cross-linked (Glycyl lysine isopeptide (Lys-Gly) (interchain with G-Cter in SUMO2); alternate). Serine 160 is subject to Phosphoserine. Basic and acidic residues predominate over residues 163-174 (PLDKTCHAKDTN). Positions 185 to 195 (GEDEMDMESEK) are enriched in acidic residues. At serine 193 the chain carries Phosphoserine. The segment covering 237 to 258 (ARELGDFTPHDSEPGKGRLVRE) has biased composition (basic and acidic residues). Acidic residues predominate over residues 259 to 270 (DENDASDDEDDD). A phosphoserine mark is found at serine 264, serine 297, serine 559, and serine 560. The tract at residues 380–560 (TPSNEMAPVT…MADHLEGLSS (181 aa)) is necessary and sufficient for interaction with PAX7. The disordered stretch occupies residues 533-566 (EREARRTRRRQAREQTGQMADHLEGLSSDDEETS). Phosphothreonine is present on threonine 565.

Belongs to the GCF family. Interacts with PAX3 and PAX7. Interacts with WDR5; associates with a histone methyltransferase (HMT) complex composed at least of RBBP5, ASH2L, SET1, SET2 and KMT2A/MLL1, KMT2D/MLL2, KMT2C/MLL3 and KMT2B/MLL4 through direct interaction with WDR5. Ubiquitously expressed in all tissues tested including skeletal muscle. Expressed in primary myoblasts.

It localises to the nucleus. Functionally, adapter protein linking the transcription factors PAX3 and PAX7 to the histone methylation machinery and involved in myogenesis. Associates with a histone methyltransferase complex that specifically mediates dimethylation and trimethylation of 'Lys-4' of histone H3. Mediates the recruitment of that complex to the transcription factors PAX3 and PAX7 on chromatin to regulate the expression of genes involved in muscle progenitor cells proliferation including ID3 and CDC20. The sequence is that of PAX3- and PAX7-binding protein 1 (Paxbp1) from Mus musculus (Mouse).